The following is a 285-amino-acid chain: Heterogeneous nuclear ribonucleoprotein A/B (285 aa).

The interval methionine 1–isoleucine 65 is disordered. The span at glutamate 25–alanine 43 shows a compositional bias: low complexity. RRM domains are found at residues glycine 75–valine 158 and lysine 159–glutamate 238. Serine 87 bears the Phosphoserine mark. Residues lysine 136 and lysine 208 each participate in a glycyl lysine isopeptide (Lys-Gly) (interchain with G-Cter in SUMO2) cross-link. Lysine 220 carries the N6-acetyllysine modification. Residues valine 239–tyrosine 285 form a disordered region. At serine 247 the chain carries Phosphoserine. Arginine 250 is modified (dimethylated arginine; alternate). At arginine 250 the chain carries Omega-N-methylarginine; alternate. Omega-N-methylarginine is present on residues arginine 255 and arginine 258. N6-acetyllysine is present on lysine 271. Residue arginine 275 is modified to Dimethylated arginine; alternate. Residue arginine 275 is modified to Omega-N-methylarginine; alternate. Arginine 275 is modified (asymmetric dimethylarginine; alternate).

As to quaternary structure, identified in a IGF2BP1-dependent mRNP granule complex containing untranslated mRNAs. Interacts with APOBEC1. In terms of tissue distribution, ubiquitous.

The protein localises to the nucleus. The protein resides in the cytoplasm. Functionally, transcriptional repressor. Binds to CArG box motifs, single-stranded and double-stranded DNA, and RNA. It may be that repression by CBF-A is a result of competitive binding of CBF, a putative positive factor, and CBF-A to the same or overlapping motifs around the CArG boxes. This chain is Heterogeneous nuclear ribonucleoprotein A/B (Hnrnpab), found in Mus musculus (Mouse).